Here is a 69-residue protein sequence, read N- to C-terminus: Protein translocase subunit SecE (69 aa).

A helical membrane pass occupies residues 43–63 (VAGAGILVIGFVGFLIYVLLT).

Belongs to the SecE/SEC61-gamma family. As to quaternary structure, component of the Sec protein translocase complex. Heterotrimer consisting of SecY (alpha), SecG (beta) and SecE (gamma) subunits. The heterotrimers can form oligomers, although 1 heterotrimer is thought to be able to translocate proteins. Interacts with the ribosome. May interact with SecDF, and other proteins may be involved.

The protein resides in the cell membrane. Functionally, essential subunit of the Sec protein translocation channel SecYEG. Clamps together the 2 halves of SecY. May contact the channel plug during translocation. This chain is Protein translocase subunit SecE, found in Methanococcoides burtonii (strain DSM 6242 / NBRC 107633 / OCM 468 / ACE-M).